A 129-amino-acid chain; its full sequence is MSATEEILEKLKSLTLLEAADLVKQIEETFGVSAAPAAGVMMAAPGAGGAAGGEEAEEKTEFDVVLEEVPSDKKIAVLKVVRTLTGLGLKEAKEMVESTPKSIKEGVSKEDAEEAKKSLEDAGGKASLK.

A compositionally biased stretch (basic and acidic residues) spans 95-123 (MVESTPKSIKEGVSKEDAEEAKKSLEDAG). Positions 95 to 129 (MVESTPKSIKEGVSKEDAEEAKKSLEDAGGKASLK) are disordered.

This sequence belongs to the bacterial ribosomal protein bL12 family. As to quaternary structure, homodimer. Part of the ribosomal stalk of the 50S ribosomal subunit. Forms a multimeric L10(L12)X complex, where L10 forms an elongated spine to which 2 to 4 L12 dimers bind in a sequential fashion. Binds GTP-bound translation factors.

Functionally, forms part of the ribosomal stalk which helps the ribosome interact with GTP-bound translation factors. Is thus essential for accurate translation. This is Large ribosomal subunit protein bL12 from Acaryochloris marina (strain MBIC 11017).